The sequence spans 86 residues: Large ribosomal subunit protein bL27 (86 aa).

Positions 1 to 24 (MAHKKGTGSTRNGRDSNSKRLGVK) are disordered.

This sequence belongs to the bacterial ribosomal protein bL27 family.

This chain is Large ribosomal subunit protein bL27, found in Prochlorococcus marinus (strain AS9601).